The chain runs to 180 residues: Translation initiation factor IF-3 (180 aa).

This sequence belongs to the IF-3 family. In terms of assembly, monomer.

It is found in the cytoplasm. In terms of biological role, IF-3 binds to the 30S ribosomal subunit and shifts the equilibrium between 70S ribosomes and their 50S and 30S subunits in favor of the free subunits, thus enhancing the availability of 30S subunits on which protein synthesis initiation begins. The polypeptide is Translation initiation factor IF-3 (Salmonella typhimurium (strain LT2 / SGSC1412 / ATCC 700720)).